The primary structure comprises 162 residues: Regulatory protein RecX (162 aa).

This sequence belongs to the RecX family.

Its subcellular location is the cytoplasm. Modulates RecA activity. In Xanthomonas oryzae pv. oryzae (strain PXO99A), this protein is Regulatory protein RecX.